The primary structure comprises 529 residues: O-acetylstemmadenine oxidase (529 aa).

Positions 1 to 23 (MIKKVPIVLSIFCFLLLLSSSHG) are cleaved as a signal peptide. The cysteines at positions 32 and 92 are disulfide-linked. An N-linked (GlcNAc...) asparagine glycan is attached at N52. The FAD-binding PCMH-type domain occupies 70–244 (KSPKPLAIIT…VSWKVKLVKV (175 aa)). FAD is bound by residues 102-108 (IRSGGAD), S113, 168-169 (VS), 173-177 (GIGGH), and F183. The N-linked (GlcNAc...) asparagine glycan is linked to N293. FAD is bound at residue W465.

It belongs to the oxygen-dependent FAD-linked oxidoreductase family. FAD is required as a cofactor. As to expression, expressed in leaf epidermis.

The protein resides in the endoplasmic reticulum. It is found in the vacuole. Its subcellular location is the vesicle. The catalysed reaction is O-acetyl-15alpha-stemmadenine + O2 = precondylocarpine acetate + H2O2. Its pathway is alkaloid biosynthesis. Functionally, component of the seco-iridoid and derivatives monoterpenoid indole alkaloids (MIAs, e.g. vinblastine, catharanthine, tabersonine, vincadifformine, vindoline, vincristine, quinine and strychnine) biosynthesis pathway. Converts O-acetylstemmadenine (OAS) to reactive acetylated intermediates, likely dihydroprecondylocarpine acetate. The protein is O-acetylstemmadenine oxidase of Catharanthus roseus (Madagascar periwinkle).